Consider the following 500-residue polypeptide: Ent-cassadiene C11-alpha-hydroxylase 1 (500 aa).

Residues 4-24 form a helical membrane-spanning segment; the sequence is SQVWLLWGALSVAVLFYLSTL. Cys442 is a heme binding site.

The protein belongs to the cytochrome P450 family. The cofactor is heme.

It is found in the membrane. The catalysed reaction is ent-cassa-12,15-diene + reduced [NADPH--hemoprotein reductase] + O2 = ent-11beta-hydroxycassa-12,15-diene + oxidized [NADPH--hemoprotein reductase] + H2O + H(+). Its function is as follows. Enzyme of the diterpenoid metabolism involved in the biosynthesis of antibacterial oryzalides such as phytocassane. Can use ent-cassadiene as substrate, but not C11-alpha-hydroxy-ent-cassadiene, ent-pimaradiene, ent-sandaracopimaradiene, ent-kaurene, ent-isokaurene, syn-pimaradiene, syn-stemarene, syn-stemodene. The polypeptide is Ent-cassadiene C11-alpha-hydroxylase 1 (Oryza sativa subsp. japonica (Rice)).